The primary structure comprises 719 residues: Forkhead box protein K1 (719 aa).

Residue Ala2 is modified to N-acetylalanine. Residues Ala2–Pro40 are interaction with SIN3A and SIN3B. The segment at Pro35–Ala67 is disordered. Pro residues predominate over residues Thr38–Val62. Residues Ala81–Ser406 are required for interaction with FOXO4 and MEF2C. Residue Ser87 is modified to Phosphoserine. The FHA domain maps to Val109–Gln161. Omega-N-methylarginine occurs at positions 147 and 177. Ser199, Ser209, Ser225, and Ser229 each carry phosphoserine. A phosphothreonine mark is found at Thr231 and Thr233. 4 positions are modified to phosphoserine: Ser239, Ser243, Ser281, and Ser285. Positions Lys291–Arg386 form a DNA-binding region, fork-head. Positions Ser399–Leu443 are disordered. Ser402 and Ser406 each carry phosphoserine. Position 408 is a phosphothreonine (Thr408). The residue at position 414 (Ser414) is a Phosphoserine. Thr422 carries the post-translational modification Phosphothreonine. Phosphoserine is present on residues Ser427, Ser431, and Ser445. Residues Ala665–Glu685 are compositionally biased toward low complexity. Residues Ala665–Glu719 form a disordered region. Basic and acidic residues predominate over residues Pro686–Glu695. The segment covering Pro696 to Pro712 has biased composition (low complexity).

As to quaternary structure, interacts with SIN3A and SIN3B (via PAH2) to form a complex which represses transcription. Component of SIN3A-, but not SIN3B-, containing multiprotein complexes. Interacts with FOXO4 and MEF2C; both interactions inhibit FOXO4 and MEF2C transactivation activity. Interacts (when phosphorylated) with YWHAE/14-3-3-epsilon; promotes sequestration in the cytoplasm and leads to impaired ability to bind DNA. Interacts with FHL2. Interacts with SRF. Interacts with DVL2 and DVL3; the interaction induces DVL2 nuclear translocation. Interacts with BAP1 (when phosphorylated). Accessory component of the polycomb repressive deubiquitinase (PR-DUB) complex, at least composed of BAP1, one of ASXL1, ASXL2 or (probably) ASXL3 and one of MBD5 or MBD6. The PR-DUB core associates with a number of accessory proteins, including FOXK1, FOXK2, KDM1B, HCFC1 and OGT. In terms of processing, phosphorylation by GSK3 (GSK3A or GSK3B) promotes interaction with YWHAE/14-3-3-epsilon and retention in the cytoplasm. In response to mTORC1 signaling, phosphorylation by GSK3 is prevented, leading to translocation to the nucleus. Expressed in tissues and cells in which the myoglobin gene is transcriptionally active including cardiac and skeletal myocytes, brain and kidney. In the adult brain, expressed in the piriform cortex and the indusium griseum. In the hippocampus, expression is localized to the dentate gyrus and CA3 area. In the cerebellum, expression is confined to the Purkinje cell layer. Present in neuroretinal cells: expressed in rod bipolar cells, amacrine cells and ganglion cells (at protein level).

It is found in the nucleus. The protein localises to the cytoplasm. In terms of biological role, transcriptional regulator involved in different processes such as glucose metabolism, aerobic glycolysis, muscle cell differentiation and autophagy. Recognizes and binds the forkhead DNA sequence motif (5'-GTAAACA-3') and can both act as a transcription activator or repressor, depending on the context. Together with FOXK2, acts as a key regulator of metabolic reprogramming towards aerobic glycolysis, a process in which glucose is converted to lactate in the presence of oxygen. Acts by promoting expression of enzymes for glycolysis (such as hexokinase-2 (HK2), phosphofructokinase, pyruvate kinase (PKLR) and lactate dehydrogenase), while suppressing further oxidation of pyruvate in the mitochondria by up-regulating pyruvate dehydrogenase kinases PDK1 and PDK4. Probably plays a role in gluconeogenesis during overnight fasting, when lactate from white adipose tissue and muscle is the main substrate. Involved in mTORC1-mediated metabolic reprogramming: in response to mTORC1 signaling, translocates into the nucleus and regulates the expression of genes associated with glycolysis and downstream anabolic pathways, such as HIF1A, thereby regulating glucose metabolism. Together with FOXK2, acts as a negative regulator of autophagy in skeletal muscle: in response to starvation, enters the nucleus, binds the promoters of autophagy genes and represses their expression, preventing proteolysis of skeletal muscle proteins. Acts as a transcriptional regulator of the myogenic progenitor cell population in skeletal muscle. Binds to the upstream enhancer region (CCAC box) of myoglobin (MB) gene, regulating the myogenic progenitor cell population. Promotes muscle progenitor cell proliferation by repressing the transcriptional activity of FOXO4, thereby inhibiting myogenic differentiation. Involved in remodeling processes of adult muscles that occur in response to physiological stimuli. Required to correct temporal orchestration of molecular and cellular events necessary for muscle repair. Represses myogenic differentiation by inhibiting MEFC activity. Positively regulates Wnt/beta-catenin signaling by translocating DVL into the nucleus. Reduces virus replication, probably by binding the interferon stimulated response element (ISRE) to promote antiviral gene expression. Accessory component of the polycomb repressive deubiquitinase (PR-DUB) complex; recruits the PR-DUB complex to specific FOXK1-bound genes. This is Forkhead box protein K1 from Mus musculus (Mouse).